Reading from the N-terminus, the 216-residue chain is MKEIYAIFGGNFDPIHYGHITSAEKLSREISIKKIILLPNYGPPHRSKTKTSIIDRLKMIKFAIKDNKLFTISYLETKKNTTFYTIETLKKIRKKIGYLQPLCFIIGEDNLNNLNIWKDWKKILSLSHLLICPRIHIKKSNPKLKKWISDHTTKNSNLLHKKPFGFIFFSKMSMLNISSTAIRKSYYEGKSACGLLPSKIDKYILSKNLYKIYNQN.

This sequence belongs to the NadD family.

It catalyses the reaction nicotinate beta-D-ribonucleotide + ATP + H(+) = deamido-NAD(+) + diphosphate. Its pathway is cofactor biosynthesis; NAD(+) biosynthesis; deamido-NAD(+) from nicotinate D-ribonucleotide: step 1/1. In terms of biological role, catalyzes the reversible adenylation of nicotinate mononucleotide (NaMN) to nicotinic acid adenine dinucleotide (NaAD). The chain is Probable nicotinate-nucleotide adenylyltransferase from Buchnera aphidicola subsp. Schizaphis graminum (strain Sg).